Reading from the N-terminus, the 491-residue chain is Serine/threonine-protein phosphatase 2A regulatory subunit B'' subunit delta (491 aa).

Residues 331–366 (TTPTSTEYWFRCMDLDGDGALSMFELEFFYEEQAQR) enclose the EF-hand domain. Ca(2+) is bound by residues Asp344, Asp346, Asp348, and Glu355. Acidic residues-rich tracts occupy residues 460-473 (AMAE…EGSD) and 481-491 (ADEDCDDLEPL). The tract at residues 460–491 (AMAEDDDDHDEGSDPIDLYGLADEDCDDLEPL) is disordered.

In terms of assembly, PP2A consists of a common heterodimeric core enzyme, composed of a 36 kDa catalytic subunit (subunit C) and a 65 kDa constant regulatory subunit (PR65 or subunit A), that associates with a variety of regulatory subunits. Proteins that associate with the core dimer include three families of regulatory subunits B (the R2/B/PR55/B55, R3/B''/PR72/PR130/PR59 and R5/B'/B56 families), the 48 kDa variable regulatory subunit, viral proteins, and cell signaling molecules. As to expression, expressed in testis, kidney, liver, lung, spleen, brain and heart.

Its function is as follows. The B regulatory subunit might modulate substrate selectivity and catalytic activity, and might also direct the localization of the catalytic enzyme to a particular subcellular compartment. Interacts with retinoblastoma-related protein p107 (in vivo). May target PP2A core dimer to p107 resulting in dephosphorylation of p107. The sequence is that of Serine/threonine-protein phosphatase 2A regulatory subunit B'' subunit delta (Ppp2r3d) from Mus musculus (Mouse).